The chain runs to 788 residues: Glycerol-3-phosphate acyltransferase (788 aa).

The tract at residues 104 to 135 (LLPGRDPYHPNPRQQRRILRSDPQRARVMAGE) is disordered. Residues 271 to 276 (SHRSYI) carry the HXXXXD motif motif.

This sequence belongs to the GPAT/DAPAT family.

Its subcellular location is the cell membrane. The catalysed reaction is sn-glycerol 3-phosphate + an acyl-CoA = a 1-acyl-sn-glycero-3-phosphate + CoA. It participates in phospholipid metabolism; CDP-diacylglycerol biosynthesis; CDP-diacylglycerol from sn-glycerol 3-phosphate: step 1/3. The sequence is that of Glycerol-3-phosphate acyltransferase from Mycobacterium marinum (strain ATCC BAA-535 / M).